A 630-amino-acid polypeptide reads, in one-letter code: Heat shock cognate 70 kDa protein 3 (630 aa).

The tract at residues 611-630 (FYQGNNNPKPTTTTFNQDLD) is disordered. Positions 615–630 (NNNPKPTTTTFNQDLD) are enriched in low complexity.

It belongs to the heat shock protein 70 family.

Its function is as follows. May function in protein folding and assembly, and disassembly of protein complexes. In Dictyostelium discoideum (Social amoeba), this protein is Heat shock cognate 70 kDa protein 3.